Reading from the N-terminus, the 299-residue chain is ATP phosphoribosyltransferase (299 aa).

Belongs to the ATP phosphoribosyltransferase family. Long subfamily. It depends on Mg(2+) as a cofactor.

It localises to the cytoplasm. It catalyses the reaction 1-(5-phospho-beta-D-ribosyl)-ATP + diphosphate = 5-phospho-alpha-D-ribose 1-diphosphate + ATP. The protein operates within amino-acid biosynthesis; L-histidine biosynthesis; L-histidine from 5-phospho-alpha-D-ribose 1-diphosphate: step 1/9. Feedback inhibited by histidine. In terms of biological role, catalyzes the condensation of ATP and 5-phosphoribose 1-diphosphate to form N'-(5'-phosphoribosyl)-ATP (PR-ATP). Has a crucial role in the pathway because the rate of histidine biosynthesis seems to be controlled primarily by regulation of HisG enzymatic activity. The chain is ATP phosphoribosyltransferase from Rhodopirellula baltica (strain DSM 10527 / NCIMB 13988 / SH1).